Here is a 49-residue protein sequence, read N- to C-terminus: Large ribosomal subunit protein bL33A (49 aa).

The protein belongs to the bacterial ribosomal protein bL33 family.

This chain is Large ribosomal subunit protein bL33A, found in Limosilactobacillus reuteri subsp. reuteri (strain JCM 1112) (Lactobacillus reuteri).